A 250-amino-acid chain; its full sequence is Functional amyloid subunit FapC (250 aa).

An N-terminal signal peptide occupies residues 1–24; that stretch reads MKPTMALKPLVFALAALMAVAAQA. The FapC_R1 repeat unit spans residues 62–95; it reads NNAGANGSLSNSKGNLGANIAAGSGNQQDNAAAI. The interval 96–126 is linker 1; it reads TSSAGDAATVFAVADIYQESKDNKFTNKGTQ. Residues 127 to 160 form a FapC_R2 repeat; that stretch reads NNALLNNSANNSSGNVGVNVAAGQGNQQKNNLAI. Residues 161–199 form a linker 2 region; sequence VTADGKNVAAASNTEQVSLDNHFLNEASSKHSYKPQYVV. The FapC_R3 repeat unit spans residues 200–233; it reads NNAGLLNSANNASGNIGVNVAAGAGNQQSNTLTL. The short motif at 237–240 is the Cys-X-X-Cys element; the sequence is CTVC.

Belongs to the FapB/FapC family. In terms of assembly, the major component of purified amyloid fibrils. Forms fibrils in vitro; in the presence of FapA the fibrils are about 50% wider. Interacts with FapA. Fibrillates in vitro; this is inhibited by FapA. Fibrils are resistant to boiling in 2% (weight/vol) SDS and require &gt;90% (vol/vol) formic acid to dissolve.

It is found in the fimbrium. Its subcellular location is the secreted. Functionally, the major functional amyloid subunit in this bacterium. Intrinsically disordered in its monomeric state. Upon overexpression of the endogenous six-gene locus (fapA-fapF) in situ, cells form large clumps during liquid growth, make large amounts of biofilm and produce amyloid fibrils. Expression of the 6 gene operon in E.coli strain BL21(DE3) induces flocculation and biofilm formation with copious extracellular fibrils. In Pseudomonas fluorescens, this protein is Functional amyloid subunit FapC.